The primary structure comprises 118 residues: Large ribosomal subunit protein bL19 (118 aa).

The protein belongs to the bacterial ribosomal protein bL19 family.

Functionally, this protein is located at the 30S-50S ribosomal subunit interface and may play a role in the structure and function of the aminoacyl-tRNA binding site. This chain is Large ribosomal subunit protein bL19, found in Onion yellows phytoplasma (strain OY-M).